The chain runs to 839 residues: Sodium/hydrogen exchanger 3 (839 aa).

The first 32 residues, 1 to 32 (MPLGVRGTRREFRFPVWGLLLLALWMLPRALG), serve as a signal peptide directing secretion. The Extracellular segment spans residues 33–56 (VEEIPGPDSHEKQGFQIVTFKWHH). The chain crosses the membrane as a helical span at residues 57–79 (VQDPYIIALWILVASLAKIVFHL). Residues 80 to 87 (SHKVTSVV) are Cytoplasmic-facing. A helical membrane pass occupies residues 88–107 (PESALLIVLGLILGGIVWAA). Residues 108–116 (DHIASFTLT) lie on the Extracellular side of the membrane. Residues 117 to 134 (PTVFFFYLLPPIVLDAGY) traverse the membrane as a helical segment. Over 135–137 (FMP) the chain is Cytoplasmic. A helical membrane pass occupies residues 138–173 (NRLFFGNLGTILLYAVIGTVWNAATTGLSLYGVYLS). A 1,2-diacyl-sn-glycero-3-phospho-(1D-myo-inositol)-binding residues include G143, G146, and T147. Residues 174–186 (GIMGDLSIGLLDF) lie on the Extracellular side of the membrane. The chain crosses the membrane as a helical span at residues 187–208 (LLFGSLIAAVDPVAVLAVFEEV). The Cytoplasmic portion of the chain corresponds to 209-210 (HV). Residues 211 to 242 (NDVLFIIVFGESLLNDAVTVVLYNVFDSFVSL) traverse the membrane as a helical segment. Topologically, residues 243-249 (GADKVTG) are extracellular. A helical transmembrane segment spans residues 250–284 (VDCVKGIVSFFVVSLGGTLIGIIFAFLLSLVTRFT). Over 285–286 (KH) the chain is Cytoplasmic. The helical transmembrane segment at 287–309 (VRIIEPGFVFIISYLSYLTSEML) threads the bilayer. Residues 310 to 311 (SL) are Extracellular-facing. The helical transmembrane segment at 312-328 (SAILAITFCGICCQKYV) threads the bilayer. Residues 329 to 335 (KANISEQ) are Cytoplasmic-facing. Residues 336–364 (SATTVRYTMKMLASGAETIIFMFLGISAV) traverse the membrane as a helical segment. Residues 365 to 372 (DPAIWTWN) lie on the Extracellular side of the membrane. Residues 373–394 (TAFILLTLVFISVYRAIGVVLQ) traverse the membrane as a helical segment. At 395-407 (TWLLNKYRMVQLE) the chain is on the cytoplasmic side. M403 is a binding site for a 1,2-diacyl-sn-glycero-3-phospho-(1D-myo-inositol). A helical membrane pass occupies residues 408–431 (IIDQVVMSYGGLRGAVAYALVVLL). Residues 432–438 (DEKKVKE) lie on the Extracellular side of the membrane. A helical transmembrane segment spans residues 439–472 (KNLFVSTTIIVVFFTVIFQGLTIKPLVQWLKVKK). Residues 473 to 839 (SEHREPKLNE…RSFLPESTHM (367 aa)) are Cytoplasmic-facing. A 1,2-diacyl-sn-glycero-3-phospho-(1D-myo-inositol) contacts are provided by Q502, I503, and H505. S560 and S568 each carry phosphoserine. The segment at 581–595 (RPSTVEASVSYLLRE) is interaction with EZR. The interval 596–673 (NVSTVCLDMQ…RKRLESFKST (78 aa)) is interaction with NHERF4. The interaction with AHCYL1 stretch occupies residues 597–701 (VSTVCLDMQA…GQKRRNSSIP (105 aa)). Phosphoserine is present on residues S598 and S613. A Phosphoserine; by SGK1 modification is found at S669. Positions 688–697 (KRERGQKRRN) are enriched in basic residues. Positions 688-710 (KRERGQKRRNSSIPNGKIPMESP) are disordered. S724, S815, and S818 each carry phosphoserine.

Belongs to the monovalent cation:proton antiporter 1 (CPA1) transporter (TC 2.A.36) family. Homodimer. Found in the forms of complex and dynamic macromolecular complexes. Binds NHERF1 and NHERF2. Interacts with CHP1, CHP2 and SHANK2. Interacts with NHERF4 and interactions decrease in response to elevated calcium ion levels. Interacts with PDZK1 (via C-terminal PDZ domain). Interacts with AHCYL1; the interaction is required for SLC9A3 activity. Interacts with EZR; interaction targets SLC9A3 to the apical membrane. Interacts with SNX27 (via PDZ domains); directs SLC9A3 membrane insertion from early endosomes to the plasma membrane. In terms of processing, phosphorylated by PKA, which inhibits activity. Phosphorylation at Ser-669 by SGK1 is associated with increased abundance at the cell membrane.

The protein localises to the apical cell membrane. It is found in the cell membrane. The protein resides in the recycling endosome membrane. Its subcellular location is the early endosome membrane. The catalysed reaction is Na(+)(in) + H(+)(out) = Na(+)(out) + H(+)(in). Its activity is regulated as follows. Seems to switch between active and inactive modes in response to various stimuli. Activated directly or indirectly by membrane phosphatidylinositol (PIs). Regulated by a variety of auxiliary proteins, which facilitate the maturation, cell surface expression and function of the transporter. Inhibited specifically by the drug tenapanor. In terms of biological role, plasma membrane Na(+)/H(+) antiporter. Exchanges intracellular H(+) ions for extracellular Na(+) in 1:1 stoichiometry, playing a key role in salt and fluid absorption and pH homeostasis. Major apical Na(+)/H(+) exchanger in kidney and intestine playing an important role in renal and intestine Na(+) absorption and blood pressure regulation. This chain is Sodium/hydrogen exchanger 3 (SLC9A3), found in Didelphis virginiana (North American opossum).